Here is a 117-residue protein sequence, read N- to C-terminus: Large ribosomal subunit protein bL20 (117 aa).

The protein belongs to the bacterial ribosomal protein bL20 family.

Functionally, binds directly to 23S ribosomal RNA and is necessary for the in vitro assembly process of the 50S ribosomal subunit. It is not involved in the protein synthesizing functions of that subunit. In Mesomycoplasma hyopneumoniae (strain 7448) (Mycoplasma hyopneumoniae), this protein is Large ribosomal subunit protein bL20.